Consider the following 37-residue polypeptide: Large ribosomal subunit protein bL36c (37 aa).

It belongs to the bacterial ribosomal protein bL36 family.

It is found in the plastid. The chain is Large ribosomal subunit protein bL36c from Cuscuta exaltata (Tall dodder).